The following is a 407-amino-acid chain: Protein-glutamine gamma-glutamyltransferase (407 aa).

An N-terminal signal peptide occupies residues Met1–Ala31. A propeptide spanning residues Asp32 to Pro76 is cleaved from the precursor. Low complexity predominate over residues Ser62–Ser72. Residues Ser62–Pro98 are disordered. Positions Pro76–Asp94 are enriched in basic and acidic residues. Residue Cys140 is part of the active site. Residues Gln282–Ser322 are disordered. Residues Ser286–Ala298 are compositionally biased toward basic and acidic residues. Residues Asp331 and His350 contribute to the active site.

It belongs to the bacterial TGase family.

It carries out the reaction L-glutaminyl-[protein] + L-lysyl-[protein] = [protein]-L-lysyl-N(6)-5-L-glutamyl-[protein] + NH4(+). Catalyzes the cross-linking of proteins and the conjugation of polyamines to proteins. This chain is Protein-glutamine gamma-glutamyltransferase, found in Streptomyces mobaraensis (Streptoverticillium mobaraense).